A 289-amino-acid chain; its full sequence is Pantothenate synthetase (289 aa).

33-40 is an ATP binding site; the sequence is MGNLHDGH. Histidine 40 acts as the Proton donor in catalysis. A (R)-pantoate-binding site is contributed by glutamine 64. Glutamine 64 is a beta-alanine binding site. 155–158 contributes to the ATP binding site; that stretch reads GKKD. Glutamine 161 is a (R)-pantoate binding site. ATP-binding positions include alanine 184 and 192–195; that span reads LSSR.

This sequence belongs to the pantothenate synthetase family. As to quaternary structure, homodimer.

The protein resides in the cytoplasm. It carries out the reaction (R)-pantoate + beta-alanine + ATP = (R)-pantothenate + AMP + diphosphate + H(+). The protein operates within cofactor biosynthesis; (R)-pantothenate biosynthesis; (R)-pantothenate from (R)-pantoate and beta-alanine: step 1/1. In terms of biological role, catalyzes the condensation of pantoate with beta-alanine in an ATP-dependent reaction via a pantoyl-adenylate intermediate. The polypeptide is Pantothenate synthetase (Acidovorax sp. (strain JS42)).